Consider the following 160-residue polypeptide: MSKEVIVESFELDHTIVKAPYVRLIGEESGPKGDVISNFDIRLVQPNEDSIPTAGLHTIEHLLAMLIRKRIDGMIDCSPFGCRTGFHMIMWGRHTPSEIAQVIKSCLEEIAETTTWEDVPGTTIESCGNYKDHSLFSAKEWAKLILKQGISDNAFERHVI.

Positions 57, 61, and 127 each coordinate Fe cation.

This sequence belongs to the LuxS family. As to quaternary structure, homodimer. Requires Fe cation as cofactor.

It carries out the reaction S-(5-deoxy-D-ribos-5-yl)-L-homocysteine = (S)-4,5-dihydroxypentane-2,3-dione + L-homocysteine. In terms of biological role, involved in the synthesis of autoinducer 2 (AI-2) which is secreted by bacteria and is used to communicate both the cell density and the metabolic potential of the environment. The regulation of gene expression in response to changes in cell density is called quorum sensing. Catalyzes the transformation of S-ribosylhomocysteine (RHC) to homocysteine (HC) and 4,5-dihydroxy-2,3-pentadione (DPD). In Streptococcus gordonii (strain Challis / ATCC 35105 / BCRC 15272 / CH1 / DL1 / V288), this protein is S-ribosylhomocysteine lyase.